A 443-amino-acid polypeptide reads, in one-letter code: MGGVGEPDWEPGQRGAPLPTLRWEQVRRHNLPGDKWLVIERRVYDISRWAQRHPGGSRLIGHHGAEDATDAFHAFHQDLSFVRKFLQPLLIGELAPEEPSQDGPQNTQLIEDFRALRQAVEDMKLFEAKPAFFGLLLGHILAMEVLAWLMIYMLGPGWVPSTLAALILAISQAQSWCLQHDLGHTSIFRNSRWNHLAQQFVMGQLKGFSAHWWNFRHFQHHAKPNIFHKDPDVTVAPVFLLGESSVEYGKKKRRYLPYNHQHLYFFLIGPPLLTLVNFEVENLAYMLVCMQWMDLLWAASFYARFLLSYIPFYGIPGALLLFVAVRVLESHWFVWITQMNHIPREIGHEKHRDWASSQLAATCNVEPSLFIDWFSGHLNFQIEHHLFPTMPRHNYRRVAPLVKALCAKHGLSYEVKPFLTALVDIIRSLKKSGNVWLEAYLHQ.

Topologically, residues 1 to 130 are cytoplasmic; it reads MGGVGEPDWE…EDMKLFEAKP (130 aa). The Cytochrome b5 heme-binding domain maps to 18–95; that stretch reads LPTLRWEQVR…LQPLLIGELA (78 aa). Residues 131–151 traverse the membrane as a helical segment; sequence AFFGLLLGHILAMEVLAWLMI. Residue Tyr-152 is a topological domain, lumenal. Residues 153–173 traverse the membrane as a helical segment; sequence MLGPGWVPSTLAALILAISQA. Topologically, residues 174-259 are cytoplasmic; it reads QSWCLQHDLG…KKKRRYLPYN (86 aa). A Histidine box-1 motif is present at residues 180-184; it reads HDLGH. Residues 217 to 221 carry the Histidine box-2 motif; the sequence is HFQHH. A helical transmembrane segment spans residues 260 to 280; sequence HQHLYFFLIGPPLLTLVNFEV. At 281-282 the chain is on the lumenal side; it reads EN. The chain crosses the membrane as a helical span at residues 283-303; the sequence is LAYMLVCMQWMDLLWAASFYA. Arg-304 is a topological domain (cytoplasmic). Residues 305-325 form a helical membrane-spanning segment; sequence FLLSYIPFYGIPGALLLFVAV. At 326-443 the chain is on the lumenal side; the sequence is RVLESHWFVW…NVWLEAYLHQ (118 aa). The Histidine box-3 motif lies at 381-385; sequence QIEHH.

This sequence belongs to the fatty acid desaturase type 1 family.

It is found in the endoplasmic reticulum membrane. It carries out the reaction an N-acylsphing-4-enine + 2 Fe(II)-[cytochrome b5] + O2 + 2 H(+) = an N-acyl-sphinga-4E,14Z-dienine + 2 Fe(III)-[cytochrome b5] + 2 H2O. The enzyme catalyses N-(hexanoyl)sphing-4-enine + 2 Fe(II)-[cytochrome b5] + O2 + 2 H(+) = N-hexanoyl-sphinga-4E,14Z-dienine + 2 Fe(III)-[cytochrome b5] + 2 H2O. The catalysed reaction is sphing-4-enine + 2 Fe(II)-[cytochrome b5] + O2 + 2 H(+) = sphinga-4E,14Z-dienine + 2 Fe(III)-[cytochrome b5] + 2 H2O. It catalyses the reaction (11E)-octadecenoyl-CoA + 2 Fe(II)-[cytochrome b5] + O2 + 2 H(+) = (11E,13Z)-octadecadienoyl-CoA + 2 Fe(III)-[cytochrome b5] + 2 H2O. It carries out the reaction N-acyl-1-deoxysphinganine + 2 Fe(II)-[cytochrome b5] + O2 + 2 H(+) = N-acyl-1-deoxysphing-14Z-enine + 2 Fe(III)-[cytochrome b5] + 2 H2O. The enzyme catalyses an N-acylsphinganine + 2 Fe(II)-[cytochrome b5] + O2 + 2 H(+) = an N-acylsphing-14Z-enine + 2 Fe(III)-[cytochrome b5] + 2 H2O. The protein operates within lipid metabolism; polyunsaturated fatty acid biosynthesis. Its pathway is lipid metabolism; sphingolipid metabolism. In terms of biological role, mammals have different sphingoid bases that differ in their length and/or pattern of desaturation and hydroxyl groups. The predominant sphingoid base that comprises mammalian ceramides is sphing-4-enine (sphingosine or SPH) which has a trans (E) desaturation at carbon 4. FADS3 is a desaturase that introduces a cis (Z) double bond between carbon 14 and carbon 15 of the sphingoid base (also known as long chain base, LCB), producing LCBs such as sphinga-4,14-dienine (SPD, d18:2(4E,14Z)) from SPH. Prefers SPH-containing ceramides (N-acylsphing-4-enines) as substrates. Capable of metabolizing also the SPH in its free form. SPD ceramides occur widely in mammalian tissues and cells. Due to their unusual structure containing a cis double bond, SPD ceramides may have an opposite, negative role in lipid microdomain formation relative to conventional ceramides. Could be involved in the detoxification of 1-deoxy sphingolipids, by desaturating the cytotoxic 1-deoxysphinganine (1-deoxySA, m18:0), produced under pathological conditions, to 1-deoxysphingenine (1-deoxysphingosine, 1-deoxySO, m18:1). Although prefers SPH-containing ceramides (N-acylsphing-4-enines) as substrates, it also exhibits activity toward dihydrosphingosine-containing CERs (N-acylsphinganines) and produces 14Z-SPH-containing sphingolipids. Its desaturase mechanism involves an electron transfer facilitated by cytochrome b5. FADS3 also acts as a methyl-end fatty acyl coenzyme A (CoA) desaturase that introduces a cis double bond between the preexisting double bond and the terminal methyl group of the fatty acyl chain. Desaturates (11E)-octadecenoate (trans-vaccenoate, the predominant trans fatty acid in human milk) at carbon 13 to generate (11E,13Z)-octadecadienoate (also known as conjugated linoleic acid 11E,13Z-CLA). This is Fatty acid desaturase 3 from Bos taurus (Bovine).